The following is a 511-amino-acid chain: DEP domain-containing protein 7 (511 aa).

Residues 46-136 enclose the DEP domain; the sequence is LQTQVEVKKR…SSCSLYRFTT (91 aa).

This sequence belongs to the DEPDC7 family. As to expression, expressed in liver.

This chain is DEP domain-containing protein 7 (DEPDC7), found in Homo sapiens (Human).